The following is a 268-amino-acid chain: 4-hydroxy-tetrahydrodipicolinate reductase (268 aa).

Residues 10 to 15, aspartate 36, 99 to 101, and 123 to 126 each bind NAD(+); these read GAGGRM, GTT, and APNM. The active-site Proton donor/acceptor is the histidine 156. Histidine 157 is a (S)-2,3,4,5-tetrahydrodipicolinate binding site. Residue lysine 160 is the Proton donor of the active site. A (S)-2,3,4,5-tetrahydrodipicolinate-binding site is contributed by 166–167; it reads GT.

This sequence belongs to the DapB family.

It localises to the cytoplasm. It carries out the reaction (S)-2,3,4,5-tetrahydrodipicolinate + NAD(+) + H2O = (2S,4S)-4-hydroxy-2,3,4,5-tetrahydrodipicolinate + NADH + H(+). The catalysed reaction is (S)-2,3,4,5-tetrahydrodipicolinate + NADP(+) + H2O = (2S,4S)-4-hydroxy-2,3,4,5-tetrahydrodipicolinate + NADPH + H(+). The protein operates within amino-acid biosynthesis; L-lysine biosynthesis via DAP pathway; (S)-tetrahydrodipicolinate from L-aspartate: step 4/4. In terms of biological role, catalyzes the conversion of 4-hydroxy-tetrahydrodipicolinate (HTPA) to tetrahydrodipicolinate. In Dechloromonas aromatica (strain RCB), this protein is 4-hydroxy-tetrahydrodipicolinate reductase.